The following is a 67-amino-acid chain: Coiled-coil domain-containing protein 179 (67 aa).

Disordered stretches follow at residues 1 to 32 and 47 to 67; these read MCLRVKDEEPAQVYPEGPRRHHPSDVSTRQSV and RKLGKRFARPNPIPDTGILWT. Positions 27-53 form a coiled coil; that stretch reads STRQSVEKRINYMQNLQKEKRKLGKRF.

This is Coiled-coil domain-containing protein 179 (Ccdc179) from Mus musculus (Mouse).